Consider the following 257-residue polypeptide: Protein-tyrosine-phosphatase IBR5 (257 aa).

The Tyrosine-protein phosphatase domain maps to 49–185; the sequence is FPSEILPEFL…LQEFEQGIFG (137 aa). Catalysis depends on cysteine 129, which acts as the Phosphocysteine intermediate. Residues 235 to 257 form a disordered region; sequence QEFTFGATPPKPTTGGDIAMDGS.

Belongs to the protein-tyrosine phosphatase family. In terms of assembly, interacts with SKP1A/ASK1 and with MPK12. In terms of tissue distribution, expressed in root tips and vasculature, cotyledons, stems, leaves vasculature and hydathodes, flowers, siliques, and seeds.

The protein resides in the nucleus. The enzyme catalyses O-phospho-L-tyrosyl-[protein] + H2O = L-tyrosyl-[protein] + phosphate. Required for the transduction of auxin and abscisic acid (ABA) signaling pathways. Dephosphorylates and inactivates the MAP kinase MPK12. The polypeptide is Protein-tyrosine-phosphatase IBR5 (IBR5) (Arabidopsis thaliana (Mouse-ear cress)).